Here is a 434-residue protein sequence, read N- to C-terminus: ATP-dependent RNA helicase uap56 (434 aa).

The interval 1–43 (MASAQEDLIDYEEEEELVQDQPAQEITPAADTAENGEKSDKKG) is disordered. A compositionally biased stretch (acidic residues) spans 7 to 18 (DLIDYEEEEELV). The short motif at 51–79 (TGFRDFLLKPELLRAITDSGFEHPSEVQQ) is the Q motif element. One can recognise a Helicase ATP-binding domain in the interval 82–257 (IPQSILGTDV…KKFMQNPLEI (176 aa)). ATP is bound at residue 95–102 (AKSGMGKT). The DECD box motif lies at 204 to 207 (DECD). One can recognise a Helicase C-terminal domain in the interval 269 to 430 (GLQQHYVKLE…ELPDEIDVGS (162 aa)).

The protein belongs to the DEAD box helicase family. DECD subfamily. In terms of assembly, interacts with mlo3 and rae1.

Its subcellular location is the nucleus. The catalysed reaction is ATP + H2O = ADP + phosphate + H(+). Its function is as follows. ATP-binding RNA helicase involved in transcription elongation and required for the export of mRNA out of the nucleus. SUB2 also plays a role in pre-mRNA splicing and spliceosome assembly. May be involved in rDNA and telomeric silencing, and maintenance of genome integrity. Links the mRNA adapter mlo3 to rae1 for targeting mRNA-protein complex to the proteins of the nucleoporin complex (NPC). This chain is ATP-dependent RNA helicase uap56 (uap56), found in Schizosaccharomyces pombe (strain 972 / ATCC 24843) (Fission yeast).